A 266-amino-acid chain; its full sequence is Protein YABBY 5 (266 aa).

Residues 1–22 (MMSSAPETFSLDHLSQHQQQQP) form a disordered region. The segment at 36-63 (CNFCDTILAVGVPCSSLFKTVTVRCGHC) adopts a C4-type zinc-finger fold. Residues 119-141 (ASPNVSSITSSNSSCANNAPATS) show a composition bias toward low complexity. Residues 119–174 (ASPNVSSITSSNSSCANNAPATSMASAANKATQREPQQPKNAPSANRTSEKRQRVP) form a disordered region. The segment covering 142-165 (MASAANKATQREPQQPKNAPSANR) has biased composition (polar residues).

This sequence belongs to the YABBY family.

The protein resides in the nucleus. Its function is as follows. May be involved in leaf cell growth and differentiation, rather than abaxial cell fate determination. This Oryza sativa subsp. indica (Rice) protein is Protein YABBY 5 (YAB5).